The sequence spans 339 residues: DNA-directed RNA polymerase subunit alpha (339 aa).

The segment at 1-235 (MTIQKNWQEL…DQLNVFVNFE (235 aa)) is alpha N-terminal domain (alpha-NTD). The tract at residues 251 to 339 (FNPAFLKKVD…ELAKRFEDHY (89 aa)) is alpha C-terminal domain (alpha-CTD).

This sequence belongs to the RNA polymerase alpha chain family. Homodimer. The RNAP catalytic core consists of 2 alpha, 1 beta, 1 beta' and 1 omega subunit. When a sigma factor is associated with the core the holoenzyme is formed, which can initiate transcription.

It carries out the reaction RNA(n) + a ribonucleoside 5'-triphosphate = RNA(n+1) + diphosphate. In terms of biological role, DNA-dependent RNA polymerase catalyzes the transcription of DNA into RNA using the four ribonucleoside triphosphates as substrates. The polypeptide is DNA-directed RNA polymerase subunit alpha (Rhodopseudomonas palustris (strain BisA53)).